The following is a 32-amino-acid chain: MSDIN-like toxin proprotein 1 (32 aa).

A propeptide spanning residues M1–P10 is cleaved from the precursor. The segment at residues A11–P17 is a cross-link (cyclopeptide (Ala-Pro)). The propeptide occupies C18–T32.

The protein belongs to the MSDIN fungal toxin family. Processed by the macrocyclase-peptidase enzyme POPB to yield a toxic cyclic heptapeptide. POPB first removes 10 residues from the N-terminus. Conformational trapping of the remaining peptide forces the enzyme to release this intermediate rather than proceed to macrocyclization. The enzyme rebinds the remaining peptide in a different conformation and catalyzes macrocyclization of the N-terminal 7 residues.

Functionally, probable toxin that belongs to the MSDIN-like toxin family responsible for a large number of food poisoning cases and deaths. The chain is MSDIN-like toxin proprotein 1 from Amanita fuligineoides.